The chain runs to 401 residues: Argininosuccinate synthase (401 aa).

9–17 is a binding site for ATP; it reads AYSGGLDTS. Tyr86 is a binding site for L-citrulline. Gly116 lines the ATP pocket. Residues Thr118, Asn122, and Asp123 each coordinate L-aspartate. Asn122 provides a ligand contact to L-citrulline. The L-citrulline site is built by Arg126, Ser174, Ser183, Glu259, and Tyr271.

The protein belongs to the argininosuccinate synthase family. Type 1 subfamily. Homotetramer.

The protein localises to the cytoplasm. The catalysed reaction is L-citrulline + L-aspartate + ATP = 2-(N(omega)-L-arginino)succinate + AMP + diphosphate + H(+). The protein operates within amino-acid biosynthesis; L-arginine biosynthesis; L-arginine from L-ornithine and carbamoyl phosphate: step 2/3. This is Argininosuccinate synthase from Bacillus cereus (strain B4264).